Consider the following 356-residue polypeptide: MALLSDLINLNLSDVTEKIIAEYIWIGGSGMDLRSKARTLSGPVSDPHKLPKWNYDGSSTGQAPGEDSEVILYPQAIFKDPFRRGNNILVMCDTYTPAGEPIPTNKRHNAAKIFSHPEVLAEETWYGIEQEYTLLQNSVKWPIGWPVGGYPGPQGPYYCGIGADKAFGRDIVDSHYKACLYAGINISGINGEVMPGQWEFQVGPAVGISAGDELWVARYILERITEIAGVVVSFDPKPIQGDWNGAGAHTNYSTKSMRNDGGYEIIKKAIEKLGLRHKEHIAAYGEGNERRLTGRHETADINTFLWGVANRGASIRVGRDTEKEGKGYFEDRRPASNMDPYVVTSMIAESTILWKP.

Residues 19 to 99 enclose the GS beta-grasp domain; the sequence is IIAEYIWIGG…VMCDTYTPAG (81 aa). Residues 106 to 356 enclose the GS catalytic domain; that stretch reads KRHNAAKIFS…IAESTILWKP (251 aa).

The protein belongs to the glutamine synthetase family. In terms of assembly, homooctamer.

It localises to the cytoplasm. The enzyme catalyses L-glutamate + NH4(+) + ATP = L-glutamine + ADP + phosphate + H(+). The polypeptide is Glutamine synthetase cytosolic isozyme 2 (GS1-2) (Vitis vinifera (Grape)).